Consider the following 208-residue polypeptide: Thymidylate kinase (208 aa).

ATP is bound at residue 10 to 17 (GIDGCGKT).

This sequence belongs to the thymidylate kinase family.

It carries out the reaction dTMP + ATP = dTDP + ADP. Functionally, phosphorylation of dTMP to form dTDP in both de novo and salvage pathways of dTTP synthesis. The chain is Thymidylate kinase from Caldanaerobacter subterraneus subsp. tengcongensis (strain DSM 15242 / JCM 11007 / NBRC 100824 / MB4) (Thermoanaerobacter tengcongensis).